A 42-amino-acid chain; its full sequence is Photosystem II reaction center protein J (42 aa).

A helical membrane pass occupies residues 12 to 32; it reads LWFVGMIVGLAALGLLGIFFY.

Belongs to the PsbJ family. In terms of assembly, PSII is composed of 1 copy each of membrane proteins PsbA, PsbB, PsbC, PsbD, PsbE, PsbF, PsbH, PsbI, PsbJ, PsbK, PsbL, PsbM, PsbT, PsbX, PsbY, PsbZ, Psb30/Ycf12, at least 3 peripheral proteins of the oxygen-evolving complex and a large number of cofactors. It forms dimeric complexes.

The protein resides in the plastid. It is found in the chloroplast thylakoid membrane. Functionally, one of the components of the core complex of photosystem II (PSII). PSII is a light-driven water:plastoquinone oxidoreductase that uses light energy to abstract electrons from H(2)O, generating O(2) and a proton gradient subsequently used for ATP formation. It consists of a core antenna complex that captures photons, and an electron transfer chain that converts photonic excitation into a charge separation. This is Photosystem II reaction center protein J from Nephroselmis olivacea (Green alga).